The primary structure comprises 170 residues: MLPLLALFLLIGPAVSTTTRDREDLTFGAEAESWVTVNLKGIPVPSIELKLQELKRSRTRQFYGLMGKRVEGVHPIQSAERTGYQLGRIVQDLLGTRGLSIEGSCRQETNHQSAGPGAVARESLQSQRGRSEPPNHQQHVALSLGTEEDDQSSERAPRDASQMMPRPSRP.

Residues 1–16 (MLPLLALFLLIGPAVS) form the signal peptide. Residues 17–54 (TTTRDREDLTFGAEAESWVTVNLKGIPVPSIELKLQEL) constitute a propeptide that is removed on maturation. At M66 the chain carries Methionine amide. Positions 67-170 (GKRVEGVHPI…SQMMPRPSRP (104 aa)) are excised as a propeptide. Residues 107–170 (QETNHQSAGP…SQMMPRPSRP (64 aa)) are disordered. Residues 123–140 (SLQSQRGRSEPPNHQQHV) show a composition bias toward polar residues.

The protein belongs to the tachykinin family.

It localises to the secreted. Functionally, tachykinins are active peptides which excite neurons, evoke behavioral responses, are potent vasodilators and secretagogues, and contract (directly or indirectly) many smooth muscles. Hemokinin induces plasma extravasation, mast cell degranulation, muscle contraction, salivary secretion and scratching behavior. Increases sperm motility. Induces potent analgesic effects and may play a role in pain modulation. Promotes survival of bone marrow B lineage cells and of cultured LPS-stimulated pre-B cells and may act as an autocrine factor required for B-cell survival and proliferation. Lowers systemic arterial pressure following intravenous injection. Induces interferon-gamma production and may play a role in the inflammatory response. Shows potent affinity and specificity for the NK-1 receptor. This Rattus norvegicus (Rat) protein is Tachykinin-4.